We begin with the raw amino-acid sequence, 564 residues long: ATP-dependent RNA helicase ROK1 (564 aa).

2 disordered regions span residues 1 to 45 (MDIF…ESQI) and 62 to 87 (EDDREKTTENDSPNKEEKSGNDDGLI). Composition is skewed to basic and acidic residues over residues 13 to 23 (VKKESGPKAKA), 33 to 45 (DENHKEDNNESQI), and 62 to 86 (EDDREKTTENDSPNKEEKSGNDDGL). The Q motif signature appears at 122–150 (DLISRFSFDKRLLNNLIENGFTEPTPIQC). In terms of domain architecture, Helicase ATP-binding spans 153 to 333 (IPVALNNRDV…QSIMMDPVRV (181 aa)). 166–173 (GPTGSGKT) is an ATP binding site. A DEAD box motif is present at residues 280 to 283 (DEAD). Residues 344 to 506 (NIEQKLIFCG…EVSEWMDKMA (163 aa)) enclose the Helicase C-terminal domain. Residues 512-564 (EKESIKNGKAHKERKQITTVPKMDKAKRRRQQEMIAASKRRKNEELSKKHFSK) are disordered. Basic and acidic residues predominate over residues 553-564 (KNEELSKKHFSK).

This sequence belongs to the DEAD box helicase family. DDX52/ROK1 subfamily. In terms of assembly, interacts with the U3 snoRNA and is associated with the 90S and 40S pre-ribosomes. This association requires the presence of RRP5. Also interacts with OSH3.

The protein localises to the nucleus. The protein resides in the nucleolus. It catalyses the reaction ATP + H2O = ADP + phosphate + H(+). ATP-dependent RNA helicase involved in 40S ribosomal subunit biogenesis. Required for the processing and cleavage of 35S pre-rRNA at sites A0, A1, and A2, leading to mature 18S rRNA. May also have a gene-specific regulatory function since it affects nuclear fusion by regulating KAR4 expression and contributes with KEM1 to ISP-1 sensitivity. The protein is ATP-dependent RNA helicase ROK1 (ROK1) of Saccharomyces cerevisiae (strain ATCC 204508 / S288c) (Baker's yeast).